The sequence spans 437 residues: Exosome complex component RRP45 (437 aa).

A Phosphoserine modification is found at Ser65. Lys297 bears the N6-acetyllysine; alternate mark. Residue Lys297 forms a Glycyl lysine isopeptide (Lys-Gly) (interchain with G-Cter in SUMO1); alternate linkage. Lys297 is covalently cross-linked (Glycyl lysine isopeptide (Lys-Gly) (interchain with G-Cter in SUMO2); alternate). Phosphoserine occurs at positions 306 and 346. Residues 339–437 (IGEGIENSWG…KRRKKKRTAN (99 aa)) form a disordered region. Acidic residues predominate over residues 349–363 (DLEDSEKEEEEEGGI). A phosphoserine mark is found at Ser392, Ser394, and Ser407. Over residues 413-425 (AQTSANQKAPSKS) the composition is skewed to polar residues. Basic residues predominate over residues 426-437 (QGKRRKKKRTAN).

Belongs to the RNase PH family. As to quaternary structure, component of the RNA exosome core complex (Exo-9), composed of EXOSC1, EXOSC2, EXOSC3, EXOSC4, EXOSC5, EXOSC6, EXOSC7, EXOSC8 and EXOSC9; within the complex interacts with EXOSC3, EXOSC4, EXOSC5 and DIS3. The catalytically inactive RNA exosome core complex (Exo-9) associates with the catalytic subunit EXOSC10/RRP6. Exo-9 may associate with DIS3 to form the nucleolar exosome complex, or DIS3L to form the cytoplasmic exosome complex. Exo-9 is formed by a hexameric base ring consisting of the heterodimers EXOSC4-EXOSC9, EXOSC5-EXOSC8 and EXOSC6-EXOSC7, and a cap ring consisting of EXOSC1, EXOSC2 and EXOSC3. The RNA exosome complex associates with cofactors C1D/RRP47, MPHOSPH6/MPP6 and MTREX/MTR4. Interacts (via C-terminus region) with SETX (via N-terminus domain); the interaction enhances SETX sumoylation. Interacts with DIS3; the interaction is direct.

The protein resides in the cytoplasm. It is found in the nucleus. It localises to the nucleolus. The protein localises to the nucleoplasm. Its function is as follows. Non-catalytic component of the RNA exosome complex which has 3'-&gt;5' exoribonuclease activity and participates in a multitude of cellular RNA processing and degradation events. In the nucleus, the RNA exosome complex is involved in proper maturation of stable RNA species such as rRNA, snRNA and snoRNA, in the elimination of RNA processing by-products and non-coding 'pervasive' transcripts, such as antisense RNA species and promoter-upstream transcripts (PROMPTs), and of mRNAs with processing defects, thereby limiting or excluding their export to the cytoplasm. The RNA exosome may be involved in Ig class switch recombination (CSR) and/or Ig variable region somatic hypermutation (SHM) by targeting AICDA deamination activity to transcribed dsDNA substrates. In the cytoplasm, the RNA exosome complex is involved in general mRNA turnover and specifically degrades inherently unstable mRNAs containing AU-rich elements (AREs) within their 3' untranslated regions, and in RNA surveillance pathways, preventing translation of aberrant mRNAs. It seems to be involved in degradation of histone mRNA. The catalytic inactive RNA exosome core complex of 9 subunits (Exo-9) is proposed to play a pivotal role in the binding and presentation of RNA for ribonucleolysis, and to serve as a scaffold for the association with catalytic subunits and accessory proteins or complexes. EXOSC9 binds to ARE-containing RNAs. The polypeptide is Exosome complex component RRP45 (Exosc9) (Rattus norvegicus (Rat)).